A 732-amino-acid chain; its full sequence is Catalase-peroxidase (732 aa).

A cross-link (tryptophyl-tyrosyl-methioninium (Trp-Tyr) (with M-246)) is located at residues 97–220 (WHSAGTYRTS…LAAVQMGLIY (124 aa)). Residue His-98 is the Proton acceptor of the active site. Residues 220-246 (YVNPEGPDGNPDPVAAGRDIRETFARM) constitute a cross-link (tryptophyl-tyrosyl-methioninium (Tyr-Met) (with W-97)). His-261 provides a ligand contact to heme b.

The protein belongs to the peroxidase family. Peroxidase/catalase subfamily. In terms of assembly, homodimer or homotetramer. Heme b is required as a cofactor. Formation of the three residue Trp-Tyr-Met cross-link is important for the catalase, but not the peroxidase activity of the enzyme.

It catalyses the reaction H2O2 + AH2 = A + 2 H2O. The enzyme catalyses 2 H2O2 = O2 + 2 H2O. Functionally, bifunctional enzyme with both catalase and broad-spectrum peroxidase activity. The chain is Catalase-peroxidase from Chlorobium phaeobacteroides (strain DSM 266 / SMG 266 / 2430).